Reading from the N-terminus, the 678-residue chain is MTQASKQQRDILVTSALPYANGPIHLGHLLEYIQTDIWVRFQNMRGHNCYYVCADDAHGTAIMLRAEREGITPEQLIDRIRQEHQEDFAGFHIRFDNYYSTHSEENQYFSEYIYRQLKDNDHIATRKITQFFDPEKEMFLADRFIKGTCPKCKTEDQYGDNCEACGATYTPAELINPRSAVSGATPVEKESEHYFFKLPEFHDFLSKWTRSGALQPQVANKLAEWLDAGLQEWDISRDAPYFGFEIPDAPGKYFYVWLDAPIGYLASFKNLCNREGIDFEHFWKKDSSAEVYHFIGKDIINFHALFWPSMLHDAGFRTPTAVWAHGFVTVNGKKMSKSRGTFIMARTYLDHLDPEYLRYYFAAKLTGGVDDMDLNLDDFAARVNSDLVGKVVNIASRSAGFITKRFDGKLGKVTEQDKLKEFIDAGEQIAEFYEAREFGRAMRRIMELADIANQYVNDEQPWVIAKQEGQDDKLQAICTNALNMFRLLMTYLAPVLPKTADAAQSFLNSRLDWNNRAALLENHGIDKFKPLMNRVDMAQIEKMLDASKEEMPAAVGQPSAAPTADLEPVAEEIEFPDFAKVDLRVAKIVKAEHVEGADKLLRLTLDIGHGERNVFAGIKSAYKPEDLEGRMTVMVANLKPRKMKFGMSEGMVLAAGPGGKEIFILSPDSGATPGMRVM.

The short motif at 18-28 (PYANGPIHLGH) is the 'HIGH' region element. Zn(2+) is bound by residues cysteine 149, cysteine 152, cysteine 162, and cysteine 165. A 'KMSKS' region motif is present at residues 334 to 338 (KMSKS). Lysine 337 is an ATP binding site. Residues 577–678 (DFAKVDLRVA…SGATPGMRVM (102 aa)) enclose the tRNA-binding domain.

This sequence belongs to the class-I aminoacyl-tRNA synthetase family. MetG type 1 subfamily. In terms of assembly, homodimer. The cofactor is Zn(2+).

It is found in the cytoplasm. It carries out the reaction tRNA(Met) + L-methionine + ATP = L-methionyl-tRNA(Met) + AMP + diphosphate. In terms of biological role, is required not only for elongation of protein synthesis but also for the initiation of all mRNA translation through initiator tRNA(fMet) aminoacylation. This is Methionine--tRNA ligase from Marinobacter nauticus (strain ATCC 700491 / DSM 11845 / VT8) (Marinobacter aquaeolei).